A 292-amino-acid polypeptide reads, in one-letter code: NAD kinase (292 aa).

Asp-73 serves as the catalytic Proton acceptor. NAD(+) contacts are provided by residues 73–74 (DG), 147–148 (NE), His-158, Arg-175, Asp-177, 188–193 (TAYSLS), and Gln-247.

The protein belongs to the NAD kinase family. It depends on a divalent metal cation as a cofactor.

The protein localises to the cytoplasm. It catalyses the reaction NAD(+) + ATP = ADP + NADP(+) + H(+). Its function is as follows. Involved in the regulation of the intracellular balance of NAD and NADP, and is a key enzyme in the biosynthesis of NADP. Catalyzes specifically the phosphorylation on 2'-hydroxyl of the adenosine moiety of NAD to yield NADP. This Escherichia coli (strain UTI89 / UPEC) protein is NAD kinase.